Reading from the N-terminus, the 177-residue chain is Large ribosomal subunit protein uL6 (177 aa).

It belongs to the universal ribosomal protein uL6 family. As to quaternary structure, part of the 50S ribosomal subunit.

This protein binds to the 23S rRNA, and is important in its secondary structure. It is located near the subunit interface in the base of the L7/L12 stalk, and near the tRNA binding site of the peptidyltransferase center. This chain is Large ribosomal subunit protein uL6, found in Brucella abortus (strain S19).